The chain runs to 206 residues: Protein GET1 (206 aa).

Topologically, residues 1–4 (MPSL) are lumenal. The chain crosses the membrane as a helical span at residues 5–24 (LITVLFLNVIIYVVNTVGAA). Topologically, residues 25–110 (TVDGLLWLLY…TFDMTIKIAR (86 aa)) are cytoplasmic. A coiled-coil region spans residues 75 to 100 (AKLRRRHDKALEAYEAKNNELTQSKS). A helical transmembrane segment spans residues 111 to 131 (WAATSGLMLFLQFWYSKTPIF). The Lumenal segment spans residues 132 to 155 (TLPPGWIPWQVQWVLSFPRAPMGT). A helical membrane pass occupies residues 156–172 (VSIQIWGGACATVVALV). Topologically, residues 173 to 206 (GDAMKASLAYVSKPKIDRIKLGATMEGKEGKKRQ) are cytoplasmic.

It belongs to the WRB/GET1 family. As to quaternary structure, interacts with GET3.

It is found in the endoplasmic reticulum membrane. In terms of biological role, required for the post-translational delivery of tail-anchored (TA) proteins to the endoplasmic reticulum. Acts as a membrane receptor for soluble GET3, which recognizes and selectively binds the transmembrane domain of TA proteins in the cytosol. The protein is Protein GET1 of Ajellomyces capsulatus (strain G186AR / H82 / ATCC MYA-2454 / RMSCC 2432) (Darling's disease fungus).